A 415-amino-acid chain; its full sequence is MFSTAKNLSVVDPDLWKYVEAERHRQDEHIELIASENYTSPAVMQAQGSQLTNKYAEGYPGKRFYGGCEFVDGVEQLAIDRLKKLFGAEYANVQPHSGSQANQAVYFSVLKPGDTVMGMNLGHGGHLTHGSPANLSGKLFNIVPYGLNDKEEIDYDEMERIALECKPKLLIGGASAYALRFDWARMADIAKKVGAYFMVDMAHYAGLIAAGVYPNPVPHADFVTSTTHKTLRGPRGGLIMAKAEFEKSLNSSVFPSLQGGPLMHVIAAKAVAFLEAAQPEFKAYQEQVLKNADTMAKTLASRGLRIISGGTQSHVFLVDLRPKGLTGKAADAYLGQAHITVNKNAIPNDPESPFVTSGIRIGSPAITTRGFKEAEAAEVANLIADILDNPTDESVIAATKAKVHALTSRFPVYGA.

(6S)-5,6,7,8-tetrahydrofolate is bound by residues L121 and 125–127 (GHL). Position 229 is an N6-(pyridoxal phosphate)lysine (K229). A (6S)-5,6,7,8-tetrahydrofolate-binding site is contributed by 352 to 354 (SPF).

Belongs to the SHMT family. As to quaternary structure, homodimer. It depends on pyridoxal 5'-phosphate as a cofactor.

It is found in the cytoplasm. It carries out the reaction (6R)-5,10-methylene-5,6,7,8-tetrahydrofolate + glycine + H2O = (6S)-5,6,7,8-tetrahydrofolate + L-serine. It participates in one-carbon metabolism; tetrahydrofolate interconversion. It functions in the pathway amino-acid biosynthesis; glycine biosynthesis; glycine from L-serine: step 1/1. In terms of biological role, catalyzes the reversible interconversion of serine and glycine with tetrahydrofolate (THF) serving as the one-carbon carrier. This reaction serves as the major source of one-carbon groups required for the biosynthesis of purines, thymidylate, methionine, and other important biomolecules. Also exhibits THF-independent aldolase activity toward beta-hydroxyamino acids, producing glycine and aldehydes, via a retro-aldol mechanism. In Methylobacillus flagellatus (strain ATCC 51484 / DSM 6875 / VKM B-1610 / KT), this protein is Serine hydroxymethyltransferase.